The chain runs to 464 residues: Lysosomal proton-coupled steroid conjugate and bile acid symporter SLC46A3 (464 aa).

The first 26 residues, 1 to 26, serve as a signal peptide directing secretion; sequence MRKVLLVEPVIFIYIFASSLTSPVVQ. Topologically, residues 27–71 are extracellular; the sequence is QFIYRKLWEEEYNSTAISSDNSSHCERNKSSPTYVMEKAIQEKTS. Residues Asn-39, Asn-47, and Asn-54 are each glycosylated (N-linked (GlcNAc...) asparagine). The helical transmembrane segment at 72-92 threads the bilayer; the sequence is FFNMQLDLTGAVPSLIVAFII. Topologically, residues 93-104 are cytoplasmic; sequence VANGDHQGRKKS. Residues 105-125 traverse the membrane as a helical segment; the sequence is LVLPSIGALIADIFLTIVSYF. Residues 126–130 lie on the Extracellular side of the membrane; that stretch reads SWPTS. A helical membrane pass occupies residues 131–151; the sequence is VLFLATFISGLFGSMATFLGG. At 152 to 171 the chain is on the cytoplasmic side; it reads GFAYIADQCHDEKQKTTRIA. Residues 172–192 traverse the membrane as a helical segment; that stretch reads VIDLIFGVVSGLAGLSSGYFL. The Extracellular segment spans residues 193-198; sequence REMGFT. A helical membrane pass occupies residues 199 to 219; sequence WTFATASLLHVVNIIYITFFL. Topologically, residues 220 to 259 are cytoplasmic; the sequence is QDTVHISEFQQQAPLSYKEHLKETFSGVYMLFKTAPSKKR. Residues 260–280 form a helical membrane-spanning segment; the sequence is ILIIVLLFIFMTYLFTMFGGS. Residues 281 to 296 lie on the Extracellular side of the membrane; the sequence is SLFTLYELDEPLCWTE. The chain crosses the membrane as a helical span at residues 297 to 317; sequence VYIGYGAAAFTSISLTSFLGV. At 318 to 326 the chain is on the cytoplasmic side; sequence YLFSKCLKD. Residues 327–347 form a helical membrane-spanning segment; it reads IYIVFIGIFSYIGGIVMAAFA. Residues 348–349 lie on the Extracellular side of the membrane; it reads KT. Residues 350-370 traverse the membrane as a helical segment; sequence TLLMFLVRVPSLFSIMPIPVL. Residues 371-384 lie on the Cytoplasmic side of the membrane; sequence RSMLSKVVLPSEQG. The chain crosses the membrane as a helical span at residues 385-405; sequence AVFACIACLEVLTGTISLSVF. The Extracellular portion of the chain corresponds to 406-418; it reads NVIYAATVAWFSG. A helical transmembrane segment spans residues 419 to 439; it reads FSFLLSASLCLIPLGVLCWLL. Topologically, residues 440-464 are cytoplasmic; that stretch reads CTSWNGEDLALLVPEEVSSIDSVDS.

Belongs to the major facilitator superfamily. SLC46A family.

The protein resides in the lysosome membrane. The catalysed reaction is estrone 3-sulfate(out) + n H(+)(out) = estrone 3-sulfate(in) + n H(+)(in). It catalyses the reaction 25-hydroxyvitamin D3 sulfate(out) + n H(+)(out) = 25-hydroxyvitamin D3 sulfate(in) + n H(+)(in). It carries out the reaction cholate(out) + n H(+)(out) = cholate(in) + n H(+)(in). The enzyme catalyses glycocholate(out) + n H(+)(out) = glycocholate(in) + n H(+)(in). The catalysed reaction is taurocholate(out) + n H(+)(out) = taurocholate(in) + n H(+)(in). It catalyses the reaction dehydroepiandrosterone 3-sulfate(out) + n H(+)(out) = dehydroepiandrosterone 3-sulfate(in) + n H(+)(in). Its function is as follows. Lysosomal proton-coupled steroid conjugate and bile acid transporter. Preferentially recognizes lipophilic steroid conjugates or bile acis as endogenous substrates and seems to mediate escape from lysosomes to the cytoplasm. Modulates hepatic cytosolic copper homeostasis, maybe acting as a lysosomal copper transporter and sequestering copper ions in the lysosome. This Gallus gallus (Chicken) protein is Lysosomal proton-coupled steroid conjugate and bile acid symporter SLC46A3 (SLC46A3).